A 229-amino-acid polypeptide reads, in one-letter code: MELLLLSNSTLPGKAWLEHALPLIANQLNGRRSAVFIPFAGVTQTWDEYTDKTAEVLAPLGINVTGIHRVADPLAAIEKAEIIIVGGGNTFQLLKESRERGLLAPMADRVKRGALYIGWSAGANLACPTIRTTNDMPIVDPNGFDALDLFPLQINPHFTNALPEGHKGETREQRIRELLVVAPELTVIGLPEGNWIQVSNGQAVLGGPNTTWVFKAGEEAVALEAGHRF.

Residues S120, D135, and H157 each act as charge relay system in the active site.

This sequence belongs to the peptidase S51 family.

The protein localises to the cytoplasm. It carries out the reaction Dipeptidase E catalyzes the hydrolysis of dipeptides Asp-|-Xaa. It does not act on peptides with N-terminal Glu, Asn or Gln, nor does it cleave isoaspartyl peptides.. Hydrolyzes dipeptides containing N-terminal aspartate residues. May play a role in allowing the cell to use peptide aspartate to spare carbon otherwise required for the synthesis of the aspartate family of amino acids. This is Peptidase E from Salmonella schwarzengrund (strain CVM19633).